A 1039-amino-acid chain; its full sequence is Integrin alpha-4 (1039 aa).

A signal peptide spans 1-40 (MFSTKSAWLRNGGADQGPRGIALREAVMLLLYFGVPTGPS). The Extracellular portion of the chain corresponds to 41-983 (YNLDPENALL…LHHQRPKRHF (943 aa)). FG-GAP repeat units follow at residues 42-107 (NLDP…PNQT), 117-184 (SGEP…TELS), 193-244 (DYTR…QYKA), 246-298 (VDRQ…ENEL), 299-358 (NIVY…GAVM), 362-419 (ERVL…GISS), and 423-485 (QRIE…HPES). 3 N-linked (GlcNAc...) asparagine glycosylation sites follow: asparagine 86, asparagine 105, and asparagine 145. Cysteine 98 and cysteine 108 are disulfide-bonded. Intrachain disulfides connect cysteine 151-cysteine 172 and cysteine 190-cysteine 205. Asparagine 236 carries an N-linked (GlcNAc...) asparagine glycan. Aspartate 321, asparagine 323, aspartate 325, aspartate 329, aspartate 384, aspartate 386, aspartate 388, aspartate 392, aspartate 446, aspartate 448, asparagine 450, tyrosine 452, and aspartate 454 together coordinate Ca(2+). N-linked (GlcNAc...) asparagine glycosylation occurs at asparagine 487. 2 disulfide bridges follow: cysteine 493/cysteine 502 and cysteine 508/cysteine 564. Residues asparagine 525 and asparagine 545 are each glycosylated (N-linked (GlcNAc...) asparagine). The SG1 signature appears at 613–623 (KKEKDVIRKMI). Cysteine 629 and cysteine 634 are oxidised to a cystine. Asparagine 633, asparagine 652, and asparagine 667 each carry an N-linked (GlcNAc...) asparagine glycan. Cysteine 705 and cysteine 718 are disulfide-bonded. Residues asparagine 813 and asparagine 828 are each glycosylated (N-linked (GlcNAc...) asparagine). 2 disulfides stabilise this stretch: cysteine 859/cysteine 897 and cysteine 904/cysteine 909. The chain crosses the membrane as a helical span at residues 984–1007 (TIIIITISLLLGLIVLLLISCVMW). Residues 1008-1039 (KAGFFKRQYKSILQEENRRDSWSYVNSKSNDD) are Cytoplasmic-facing. The short motif at 1010 to 1014 (GFFKR) is the GFFKR motif element. Serine 1028 bears the Phosphoserine mark.

This sequence belongs to the integrin alpha chain family. As to quaternary structure, heterodimer of an alpha and a beta subunit. The alpha subunit can sometimes be cleaved into two non-covalently associated fragments. Alpha-4 associates with either beta-1 or beta-7. Alpha-4 interacts with PXN, LPXN, and TGFB1I1/HIC5. Interacts with CSPG4 through CSPG4 chondroitin sulfate glycosaminoglycan. Interacts with JAML; integrin alpha-4/beta-1 may regulate leukocyte to endothelial cells adhesion by controlling JAML homodimerization. ITGA4:ITGB1 is found in a ternary complex with CX3CR1 and CX3CL1. Interacts with MDK. ITGA4:ITGB1 interacts with MDK; this interaction mediates MDK-induced osteoblast cells migration through PXN phosphorylation. Integrin ITGA4:ITGB1 interacts with SVEP1 (via Sushi domain 21); thereby inhibits Ca(2+) intracellular signaling and as a result represses vasocontraction. ITGA4:ITGB1 interacts with SELP. ITGA4:ITGB1 interacts with BCAM. Phosphorylation on Ser-1028 inhibits PXN binding. Expressed in the media layer of the arterial wall (at protein level). Weakly expression in the thymus, spleen and mesenteric lymph nodes.

It localises to the membrane. Its function is as follows. Integrins alpha-4/beta-1 (VLA-4 or LPAM-2) and alpha-4/beta-7 (LPAM-1) are receptors for fibronectin. They recognize one or more domains within the alternatively spliced CS-1 and CS-5 regions of fibronectin. They are also receptors for VCAM1. Integrin alpha-4/beta-1 recognizes the sequence Q-I-D-S in VCAM1. Integrin alpha-4/beta-7 is also a receptor for MADCAM1. It recognizes the sequence L-D-T in MADCAM1. On activated endothelial cells integrin VLA-4 triggers homotypic aggregation for most VLA-4-positive leukocyte cell lines. It may also participate in cytolytic T-cell interactions with target cells. ITGA4:ITGB1 binds to fractalkine (CX3CL1) and may act as its coreceptor in CX3CR1-dependent fractalkine signaling. ITGA4:ITGB1 binds to PLA2G2A via a site (site 2) which is distinct from the classical ligand-binding site (site 1) and this induces integrin conformational changes and enhanced ligand binding to site 1. Integrin ITGA4:ITGB1 represses PRKCA-mediated L-type voltage-gated channel Ca(2+) influx and ROCK-mediated calcium sensitivity in vascular smooth muscle cells via its interaction with SVEP1, thereby inhibiting vasocontraction. This chain is Integrin alpha-4 (Itga4), found in Mus musculus (Mouse).